Consider the following 385-residue polypeptide: Acetoin utilization protein AcuC (385 aa).

It belongs to the histone deacetylase family.

It participates in ketone degradation; acetoin degradation. Functionally, role in growth on acetoin or butanediol. Involved in the breakdown of these compounds used as a carbon source. In Staphylococcus xylosus, this protein is Acetoin utilization protein AcuC (acuC).